We begin with the raw amino-acid sequence, 308 residues long: E3 ubiquitin-protein ligase SINAT2 (308 aa).

An RING-type zinc finger spans residues 60–96 (CPVCTNLMYPPIHQCPNGHTLCSNCKLRVQNTCPTCR). The segment at 110-303 (VAESLEVPCR…QELKLRVTGR (194 aa)) is SBD. The SIAH-type zinc-finger motif lies at 113-173 (SLEVPCRYQN…LVVHLKDDHK (61 aa)). Zn(2+) is bound by residues C118, C125, H137, C141, C148, C155, H167, and H172.

This sequence belongs to the SINA (Seven in absentia) family. Interacts with RAP2-2. Interacts with SINAT6. Interacts with ATG6 and TRAF1A. Interacts with WAV3. Interacts with FREE1. Interacts with ELC/VPS23A.

Its subcellular location is the endosome. The protein resides in the multivesicular body. It is found in the cytoplasmic vesicle. It localises to the autophagosome. The catalysed reaction is S-ubiquitinyl-[E2 ubiquitin-conjugating enzyme]-L-cysteine + [acceptor protein]-L-lysine = [E2 ubiquitin-conjugating enzyme]-L-cysteine + N(6)-ubiquitinyl-[acceptor protein]-L-lysine.. It participates in protein modification; protein ubiquitination. Functionally, E3 ubiquitin-protein ligase that mediates ubiquitination and subsequent proteasomal degradation of target proteins. E3 ubiquitin ligases accept ubiquitin from an E2 ubiquitin-conjugating enzyme in the form of a thioester and then directly transfers the ubiquitin to targeted substrates. It probably triggers the ubiquitin-mediated degradation of different substrates. Mediates the proteasomal-dependent degradation of ATG6, a component of the autophagosome complex. Requires TRAF1A/MUSE14 and TRAF1B/MUSE13 to target ATG6 for ubiquitination and subsequent regulation of autophagosome assembly. Modulates directly the ubiquitination and proteasomal-dependent degradation of FREE1, a component of the ESCRT-I complex. Modulates directly the ubiquitination and proteasomal-dependent degradation of ELC/VPS23A, a component of the ESCRT-I complex. The chain is E3 ubiquitin-protein ligase SINAT2 from Arabidopsis thaliana (Mouse-ear cress).